The following is a 410-amino-acid chain: MLWETSSLRPPTGARDFLPREVQRRERLEAQLTQVFRRYGYQRIITPTLEPLETLLAGGSIRAEAVLQLRDGEGTMLGLRPEFTASIVRAAATRLASGPLPLRLYYHGNVFRNSRREEGSYSSQEFFQSGVELIGAGGWLADAEILLLLADCVRAVGLSNWTLLLGDVSLTESLLNSVTPKAQAAVRRAIAQLDYVYLEAAPLPEAARQIGLQILGLRGQPEQVLPQLAQLPVSPERLRDLRQLCQILEAQQVRVVLDLSLLQTLAYYTGIVFQAVVGGEIIALGGRYDRLYALYSPQQLEQPGIGFTLLPDTLLRLLPPTPQDEATGCKRLVVPLVPAGIPAALALAARWRESEAVELELLDRSPEEIEAYARRCRIPEIAWVQADGSYHISPVKYPEPPDPTGHCGPR.

Belongs to the class-II aminoacyl-tRNA synthetase family. HisZ subfamily. In terms of assembly, heteromultimer composed of HisG and HisZ subunits.

The protein resides in the cytoplasm. It participates in amino-acid biosynthesis; L-histidine biosynthesis; L-histidine from 5-phospho-alpha-D-ribose 1-diphosphate: step 1/9. Required for the first step of histidine biosynthesis. May allow the feedback regulation of ATP phosphoribosyltransferase activity by histidine. The sequence is that of ATP phosphoribosyltransferase regulatory subunit from Synechococcus sp. (strain JA-3-3Ab) (Cyanobacteria bacterium Yellowstone A-Prime).